The following is a 737-amino-acid chain: Propionyl-CoA carboxylase alpha chain, mitochondrial (737 aa).

The transit peptide at 1–61 directs the protein to the mitochondrion; the sequence is MAGLWVRTVA…QCLVVSRSLS (61 aa). Positions 71–518 constitute a Biotin carboxylation domain; that stretch reads TFDKILIANR…STKFLSDVYP (448 aa). An N6-acetyllysine; alternate modification is found at K74. Position 74 is an N6-succinyllysine; alternate (K74). N6-succinyllysine is present on K128. K159 carries the N6-acetyllysine; alternate modification. K159 bears the N6-succinyllysine; alternate mark. K163 bears the N6-acetyllysine mark. K186 is an ATP binding site. One can recognise an ATP-grasp domain in the interval 190–387; that stretch reads KLLAKRAKVN…LVQEMILVAK (198 aa). Position 197 is an N6-succinyllysine (K197). At K209 the chain carries N6-acetyllysine; alternate. K209 bears the N6-succinyllysine; alternate mark. ATP is bound by residues 218 to 279, E270, and N305; that span reads AREI…PRHI. The residue at position 261 (S261) is a Phosphoserine. N6-succinyllysine is present on K271. K337 carries the N6-acetyllysine; alternate modification. K337 carries the N6-succinyllysine; alternate modification. Positions 345, 358, and 360 each coordinate Mg(2+). Mn(2+)-binding residues include E345, E358, and N360. R362 is a catalytic residue. An N6-succinyllysine mark is found at K394 and K416. F418 is a binding site for biotin. K505 is subject to N6-acetyllysine. N6-succinyllysine occurs at positions 511, 522, 567, and 657. One can recognise a Biotinyl-binding domain in the interval 658–737; the sequence is FMLEKVPKDT…GEGDLLVELE (80 aa). At K703 the chain carries N6-biotinyllysine; by HLCS.

As to quaternary structure, the holoenzyme is a dodecamer composed of 6 PCCA/alpha subunits and 6 PCCB/beta subunits. Interacts (via the biotin carboxylation domain) with SIRT4. Interacts with SIRT3 and SIRT5. The cofactor is biotin. Mg(2+) is required as a cofactor. It depends on Mn(2+) as a cofactor. Acetylated. Post-translationally, the biotin cofactor is covalently attached to the C-terminal biotinyl-binding domain and is required for the catalytic activity. Biotinylation is catalyzed by HLCS.

It localises to the mitochondrion matrix. The catalysed reaction is propanoyl-CoA + hydrogencarbonate + ATP = (S)-methylmalonyl-CoA + ADP + phosphate + H(+). The enzyme catalyses butanoyl-CoA + hydrogencarbonate + ATP = (2S)-ethylmalonyl-CoA + ADP + phosphate + H(+). The protein operates within metabolic intermediate metabolism; propanoyl-CoA degradation; succinyl-CoA from propanoyl-CoA: step 1/3. Its function is as follows. This is one of the 2 subunits of the biotin-dependent propionyl-CoA carboxylase (PCC), a mitochondrial enzyme involved in the catabolism of odd chain fatty acids, branched-chain amino acids isoleucine, threonine, methionine, and valine and other metabolites. Propionyl-CoA carboxylase catalyzes the carboxylation of propionyl-CoA/propanoyl-CoA to D-methylmalonyl-CoA/(S)-methylmalonyl-CoA. Within the holoenzyme, the alpha subunit catalyzes the ATP-dependent carboxylation of the biotin carried by the biotin carboxyl carrier (BCC) domain, while the beta subunit then transfers the carboxyl group from carboxylated biotin to propionyl-CoA. Propionyl-CoA carboxylase also significantly acts on butyryl-CoA/butanoyl-CoA, which is converted to ethylmalonyl-CoA/(2S)-ethylmalonyl-CoA. Other alternative minor substrates include (2E)-butenoyl-CoA/crotonoyl-CoA. This Rattus norvegicus (Rat) protein is Propionyl-CoA carboxylase alpha chain, mitochondrial.